The following is a 101-amino-acid chain: Small ribosomal subunit protein uS14 (101 aa).

It belongs to the universal ribosomal protein uS14 family. Part of the 30S ribosomal subunit. Contacts proteins S3 and S10.

Its function is as follows. Binds 16S rRNA, required for the assembly of 30S particles and may also be responsible for determining the conformation of the 16S rRNA at the A site. The protein is Small ribosomal subunit protein uS14 of Methylobacterium sp. (strain 4-46).